Consider the following 667-residue polypeptide: MGSTPFCYSINPSPSKLDFTRTHVFSPVSKQFYLDLSSFSGKPGGVSGFRSRRALLGVKAATALVEKEEKREAVTEKKKKSRVLVAGGGIGGLVFALAAKKKGFDVLVFEKDLSAIRGEGKYRGPIQIQSNALAALEAIDIEVAEQVMEAGCITGDRINGLVDGISGTWYVKFDTFTPAASRGLPVTRVISRMTLQQILARAVGEDVIRNESNVVDFEDSGDKVTVVLENGQRYEGDLLVGADGIWSKVRNNLFGRSEATYSGYTCYTGIADFIPADIESVGYRVFLGHKQYFVSSDVGGGKMQWYAFHEEPAGGADAPNGMKKRLFEIFDGWCDNVLDLLHATEEEAILRRDIYDRSPGFTWGKGRVTLLGDSIHAMQPNMGQGGCMAIEDSFQLALELDEAWKQSVETTTPVDVVSSLKRYEESRRLRVAIIHAMARMAAIMASTYKAYLGVGLGPLSFLTKFRVPHPGRVGGRFFVDIAMPSMLDWVLGGNSEKLQGRPPSCRLTDKADDRLREWFEDDDALERTIKGEWYLIPHGDDCCVSETLCLTKDEDQPCIVGSEPDQDFPGMRIVIPSSQVSKMHARVIYKDGAFFLMDLRSEHGTYVTDNEGRRYRATPNFPARFRSSDIIEFGSDKKAAFRVKVIRKTPKSTRKNESNNDKLLQTA.

A chloroplast-targeting transit peptide spans 1 to 59 (MGSTPFCYSINPSPSKLDFTRTHVFSPVSKQFYLDLSSFSGKPGGVSGFRSRRALLGVK). Residues 82 to 110 (RVLV…LVFE) and 360 to 373 (GFTW…LLGD) each bind FAD. Residues 558-612 (CIVGSEPDQDFPGMRIVIPSSQVSKMHARVIYKDGAFFLMDLRSEHGTYVTDNEG) form the FHA domain.

FAD serves as cofactor. As to expression, expressed in leaves, stems and flowers, and at lower levels in roots and siliques.

It localises to the plastid. The protein resides in the chloroplast. It carries out the reaction all-trans-zeaxanthin + 4 reduced [2Fe-2S]-[ferredoxin] + 2 O2 + 4 H(+) = all-trans-violaxanthin + 4 oxidized [2Fe-2S]-[ferredoxin] + 2 H2O. The protein operates within plant hormone biosynthesis; abscisate biosynthesis. Its function is as follows. Zeaxanthin epoxidase that plays an important role in the xanthophyll cycle and abscisic acid (ABA) biosynthesis. Converts zeaxanthin into antheraxanthin and subsequently violaxanthin. Required for resistance to osmotic and drought stresses, ABA-dependent stomatal closure, seed development and dormancy, modulation of defense gene expression and disease resistance and non-photochemical quencing (NPQ). Through its role in ABA biosynthesis, regulates the expression of stress-responsive genes such as RD29A during osmotic stress and is required for normal plant growth during vegetative development. Is required for late skotomorphogenic growth through its role in the xanthophyll carotenoids neoxanthin, violaxanthin and antheraxanthin biosynthesis. Required for beta-aminobutyric acid (BABA)-induced priming in disease resistance, tolerance to salt and drought stresses and sterility. Participates in NPQ by regulating the level of zeaxanthin in photosynthetic energy conversion. NPQ is a process that maintains the balance between dissipation and utilization of light energy to minimize the generation of oxidizing molecules and the molecular damages they can generate. This is Zeaxanthin epoxidase, chloroplastic (ZEP) from Arabidopsis thaliana (Mouse-ear cress).